The sequence spans 614 residues: MDNKKIVLLIIFSTSLLFLWDAWIKEQEKFNNPPAITQADSSAGSTQSRNDDSLPVPGSELTSSQASPDTNGIPASGGNGDSVTPRLLPSGEQIRVVTDKVIAEIDTIGGDLRRLELLQQPSSEDKDTPYALLYSEAARTYIAQSGLVGEGLPNHKTTFRAESDIRNYELSSGEDKIVIRLLAPEAQGVQVIKTYTFHRDSYVIDVGFEVENKGDATVRPFAYFQMLRDGNPPPAKTMMIPTFLGAAVYTEEGKYQKIPFSDLDKNKADYPANANNGWIAMLEHYFLTAWLPQQQTPREFFAKRQSDNLYSAGVIVPAGVIAPGEIAATTMPFYAGPEEQDNLEGLAPGLDLTVDYGWLTVIAKPLFRLLSFYHSWTDNWGVAIILLTMTVKLLFFPLSAAGYRSMAKLRLVTPKLKRIQDQYKGDRQRMHQAMMEFYKEEKINPMGGCFPILVQIPVFIALYWTILAAVELRYAPLALWIDDLSSPDPFYMLPLLMGISMFVQTKLNPTPTDPLQAKIMQIMPVAFSAIFFFFPAGLVLYSLVNNILSIAQQWKITKMYGTAPSKDTPEPPVSKQVNSSENPETTANSPADSPKQPQTPANNPRKMYKRTRKK.

The chain crosses the membrane as a helical span at residues 6-26 (IVLLIIFSTSLLFLWDAWIKE). Composition is skewed to polar residues over residues 34-48 (PAIT…STQS) and 60-70 (ELTSSQASPDT). A disordered region spans residues 34 to 87 (PAITQADSSAGSTQSRNDDSLPVPGSELTSSQASPDTNGIPASGGNGDSVTPRL). 4 consecutive transmembrane segments (helical) span residues 380–400 (WGVA…PLSA), 450–470 (FPIL…LAAV), 484–504 (LSSP…MFVQ), and 524–544 (PVAF…YSLV). The interval 562 to 614 (TAPSKDTPEPPVSKQVNSSENPETTANSPADSPKQPQTPANNPRKMYKRTRKK) is disordered. Residues 575–602 (KQVNSSENPETTANSPADSPKQPQTPAN) show a composition bias toward polar residues.

It belongs to the OXA1/ALB3/YidC family. Type 1 subfamily. As to quaternary structure, interacts with the Sec translocase complex via SecD. Specifically interacts with transmembrane segments of nascent integral membrane proteins during membrane integration.

The protein localises to the cell inner membrane. Its function is as follows. Required for the insertion and/or proper folding and/or complex formation of integral membrane proteins into the membrane. Involved in integration of membrane proteins that insert both dependently and independently of the Sec translocase complex, as well as at least some lipoproteins. Aids folding of multispanning membrane proteins. The sequence is that of Membrane protein insertase YidC from Nitrosomonas europaea (strain ATCC 19718 / CIP 103999 / KCTC 2705 / NBRC 14298).